The chain runs to 550 residues: O-phosphoserine--tRNA(Cys) ligase (550 aa).

Positions 1 to 32 (MRFNPQDWKEKSHTNFEGAWHDGPSVITPPGE) are disordered. Residues 212-214 (HMT), 257-259 (SAS), 299-300 (YY), and Asn-342 each bind substrate.

This sequence belongs to the class-II aminoacyl-tRNA synthetase family. O-phosphoseryl-tRNA(Cys) synthetase subfamily. In terms of assembly, homotetramer. Interacts with SepCysS.

It carries out the reaction tRNA(Cys) + O-phospho-L-serine + ATP = O-phospho-L-seryl-tRNA(Cys) + AMP + diphosphate. Catalyzes the attachment of O-phosphoserine (Sep) to tRNA(Cys). The chain is O-phosphoserine--tRNA(Cys) ligase from Methanoregula boonei (strain DSM 21154 / JCM 14090 / 6A8).